Reading from the N-terminus, the 115-residue chain is Basic leucine zipper transcriptional factor ATF-like (115 aa).

Residues 1–60 are disordered; that stretch reads MQQESDRNEQGYSSSPPSSNKQDSSDDTKKNHRREKNRIAAQKSRQRQTEKADSLHIESE. Positions 13–22 are enriched in low complexity; the sequence is SSSPPSSNKQ. The region spanning 27–90 is the bZIP domain; it reads DTKKNHRREK…KYLTCVLSTH (64 aa). The tract at residues 29-51 is basic motif; sequence KKNHRREKNRIAAQKSRQRQTEK. Residues 47–60 show a composition bias toward basic and acidic residues; that stretch reads RQTEKADSLHIESE. The interval 55–83 is leucine-zipper; the sequence is LHIESENLERLNSALRGEISGLREELKYL.

It belongs to the bZIP family.

It is found in the nucleus. Its subcellular location is the cytoplasm. Functionally, AP-1 family transcription factor that controls the differentiation of lineage-specific cells in the immune system: specifically mediates the differentiation of T-helper 17 cells (Th17), follicular T-helper cells (TfH), CD8(+) dendritic cells and class-switch recombination (CSR) in B-cells. The protein is Basic leucine zipper transcriptional factor ATF-like (batf) of Xenopus laevis (African clawed frog).